The sequence spans 294 residues: Sarcotoxin II-2 (294 aa).

The signal sequence occupies residues 1-22; that stretch reads MKSFVFFAACFAIVALNSLAHA. The propeptide at 23–24 is removed by a dipeptidylpeptidase; the sequence is YP. Gln25 carries the pyrrolidone carboxylic acid modification. Arginine amide is present on Arg293.

The protein belongs to the attacin/sarcotoxin-2 family. In terms of tissue distribution, synthesized by the fat body and is eventually secreted into the hemolymph.

It is found in the secreted. Its function is as follows. Sarcotoxin II is an antibacterial protein which plays a role in the inflammatory response of this insect. The main effect of sarcotoxin II on E.coli may be the inhibition of cell wall synthesis, including septum formation. This is Sarcotoxin II-2 from Sarcophaga peregrina (Flesh fly).